The primary structure comprises 629 residues: Dihydroxy-acid dehydratase 2 (629 aa).

Asp-82 is a Mg(2+) binding site. Cys-123 contacts [2Fe-2S] cluster. Residues Asp-124 and Lys-125 each coordinate Mg(2+). N6-carboxylysine is present on Lys-125. [2Fe-2S] cluster is bound at residue Cys-197. Position 493 (Glu-493) interacts with Mg(2+). Catalysis depends on Ser-519, which acts as the Proton acceptor. The segment at 603–629 is disordered; the sequence is DKGGVRRLPPDELGGPEAAFDTQTRAG.

Belongs to the IlvD/Edd family. As to quaternary structure, homodimer. [2Fe-2S] cluster is required as a cofactor. Requires Mg(2+) as cofactor.

It carries out the reaction (2R)-2,3-dihydroxy-3-methylbutanoate = 3-methyl-2-oxobutanoate + H2O. The enzyme catalyses (2R,3R)-2,3-dihydroxy-3-methylpentanoate = (S)-3-methyl-2-oxopentanoate + H2O. The protein operates within amino-acid biosynthesis; L-isoleucine biosynthesis; L-isoleucine from 2-oxobutanoate: step 3/4. It participates in amino-acid biosynthesis; L-valine biosynthesis; L-valine from pyruvate: step 3/4. In terms of biological role, functions in the biosynthesis of branched-chain amino acids. Catalyzes the dehydration of (2R,3R)-2,3-dihydroxy-3-methylpentanoate (2,3-dihydroxy-3-methylvalerate) into 2-oxo-3-methylpentanoate (2-oxo-3-methylvalerate) and of (2R)-2,3-dihydroxy-3-methylbutanoate (2,3-dihydroxyisovalerate) into 2-oxo-3-methylbutanoate (2-oxoisovalerate), the penultimate precursor to L-isoleucine and L-valine, respectively. This Nocardia farcinica (strain IFM 10152) protein is Dihydroxy-acid dehydratase 2.